Reading from the N-terminus, the 198-residue chain is Phosphoheptose isomerase (198 aa).

The SIS domain occupies 40-198 (IVTALRSGRK…IEAALMQDLS (159 aa)). 55–57 (NGG) provides a ligand contact to substrate. The Zn(2+) site is built by His64 and Glu68. Substrate contacts are provided by residues Glu68, 97 to 98 (ND), 123 to 125 (STS), Ser128, and Gln175. The Zn(2+) site is built by Gln175 and His183.

Belongs to the SIS family. GmhA subfamily. As to quaternary structure, homotetramer. Zn(2+) is required as a cofactor.

The protein resides in the cytoplasm. It catalyses the reaction 2 D-sedoheptulose 7-phosphate = D-glycero-alpha-D-manno-heptose 7-phosphate + D-glycero-beta-D-manno-heptose 7-phosphate. It participates in carbohydrate biosynthesis; D-glycero-D-manno-heptose 7-phosphate biosynthesis; D-glycero-alpha-D-manno-heptose 7-phosphate and D-glycero-beta-D-manno-heptose 7-phosphate from sedoheptulose 7-phosphate: step 1/1. Catalyzes the isomerization of sedoheptulose 7-phosphate in D-glycero-D-manno-heptose 7-phosphate. The polypeptide is Phosphoheptose isomerase (Bradyrhizobium sp. (strain BTAi1 / ATCC BAA-1182)).